A 214-amino-acid chain; its full sequence is MRKLDTRTIVVASHNKGKIAEIADLIGPFGFSAKSAAELNFSEPEETGTTFEENAAIKALASAKASGLPALSDDSGLVIDALDGAPGVYTANWAETADGTRDFAMAMQKVEDALAERGASKPEDRTARFVSVLCLAWPDGHVEYFRGEVEGTVVWPPRGTSGFGYDPIFKPDGYDTTFGEMSADEKHGWKHGDAFALSHRARAFKKFVETCLEA.

13 to 18 (SHNKGK) lines the substrate pocket. The Mg(2+) site is built by glutamate 45 and aspartate 74. The active-site Proton acceptor is the aspartate 74. Substrate is bound by residues serine 75, 163-166 (FGYD), lysine 186, and 199-200 (HR).

Belongs to the HAM1 NTPase family. As to quaternary structure, homodimer. It depends on Mg(2+) as a cofactor.

The enzyme catalyses XTP + H2O = XMP + diphosphate + H(+). It catalyses the reaction dITP + H2O = dIMP + diphosphate + H(+). It carries out the reaction ITP + H2O = IMP + diphosphate + H(+). Its function is as follows. Pyrophosphatase that catalyzes the hydrolysis of nucleoside triphosphates to their monophosphate derivatives, with a high preference for the non-canonical purine nucleotides XTP (xanthosine triphosphate), dITP (deoxyinosine triphosphate) and ITP. Seems to function as a house-cleaning enzyme that removes non-canonical purine nucleotides from the nucleotide pool, thus preventing their incorporation into DNA/RNA and avoiding chromosomal lesions. The sequence is that of dITP/XTP pyrophosphatase from Agrobacterium fabrum (strain C58 / ATCC 33970) (Agrobacterium tumefaciens (strain C58)).